The chain runs to 173 residues: ATP synthase subunit b (173 aa).

A helical transmembrane segment spans residues 20 to 40 (IIATLAIFLVLMFLLKKVAWG).

The protein belongs to the ATPase B chain family. F-type ATPases have 2 components, F(1) - the catalytic core - and F(0) - the membrane proton channel. F(1) has five subunits: alpha(3), beta(3), gamma(1), delta(1), epsilon(1). F(0) has three main subunits: a(1), b(2) and c(10-14). The alpha and beta chains form an alternating ring which encloses part of the gamma chain. F(1) is attached to F(0) by a central stalk formed by the gamma and epsilon chains, while a peripheral stalk is formed by the delta and b chains.

The protein localises to the cell membrane. In terms of biological role, f(1)F(0) ATP synthase produces ATP from ADP in the presence of a proton or sodium gradient. F-type ATPases consist of two structural domains, F(1) containing the extramembraneous catalytic core and F(0) containing the membrane proton channel, linked together by a central stalk and a peripheral stalk. During catalysis, ATP synthesis in the catalytic domain of F(1) is coupled via a rotary mechanism of the central stalk subunits to proton translocation. Component of the F(0) channel, it forms part of the peripheral stalk, linking F(1) to F(0). This chain is ATP synthase subunit b, found in Lysinibacillus sphaericus (strain C3-41).